The following is a 171-amino-acid chain: 16S rRNA aminocarboxypropyltransferase (171 aa).

The S-adenosyl-L-methionine site is built by T17, L67, L90, and T109.

Belongs to the TDD superfamily. TSR3 family.

It localises to the cytoplasm. The enzyme catalyses an N(1)-methylpseudouridine in rRNA + S-adenosyl-L-methionine = N(1)-methyl-N(3)-[(3S)-3-amino-3-carboxypropyl]pseudouridine in rRNA + S-methyl-5'-thioadenosine + H(+). In terms of biological role, aminocarboxypropyltransferase that catalyzes the aminocarboxypropyl transfer on pseudouridine corresponding to position 914 in M.jannaschii 16S rRNA. It constitutes the last step in biosynthesis of the hypermodified N1-methyl-N3-(3-amino-3-carboxypropyl) pseudouridine (m1acp3-Psi). The protein is 16S rRNA aminocarboxypropyltransferase of Methanobrevibacter smithii (strain ATCC 35061 / DSM 861 / OCM 144 / PS).